A 306-amino-acid polypeptide reads, in one-letter code: MNTKEKHSDLIKAEAIRLGFLSCGISKANFLEEEAPRLEKWLKNNMNGEMQYMENHFDKRLDPRLLVDDAKSVISLTLNYYPEEQQADGTYKISKYAYGHDYHHVIKGKLKQLQEFISEEIGEVGGRAFVDSAPVLDKAWAAKSGLGWIGKHSNLLTQKTGSFYFIAELIVDLDLTYDHPVTDHCGTCTACIDACPTQAIVQPYVVDGSKCISYFTIELKNEIPQEFQGKFDDWAFGCDVCQDVCPWNRFSKPHSEPLFNPHPDLLSLTKKDWEEITDDVFKKVFQKSAVKRTKYAGLKRNIDFLK.

Aspartate 131 serves as the catalytic Proton donor. The 33-residue stretch at 173–205 folds into the 4Fe-4S ferredoxin-type domain; that stretch reads LDLTYDHPVTDHCGTCTACIDACPTQAIVQPYV. Residues cysteine 185, cysteine 188, cysteine 191, cysteine 195, cysteine 211, cysteine 238, cysteine 241, and cysteine 245 each contribute to the [4Fe-4S] cluster site.

The protein belongs to the QueG family. As to quaternary structure, monomer. Cob(II)alamin is required as a cofactor. It depends on [4Fe-4S] cluster as a cofactor.

It is found in the cytoplasm. It carries out the reaction epoxyqueuosine(34) in tRNA + AH2 = queuosine(34) in tRNA + A + H2O. The protein operates within tRNA modification; tRNA-queuosine biosynthesis. Its function is as follows. Catalyzes the conversion of epoxyqueuosine (oQ) to queuosine (Q), which is a hypermodified base found in the wobble positions of tRNA(Asp), tRNA(Asn), tRNA(His) and tRNA(Tyr). This is Epoxyqueuosine reductase from Cellulophaga algicola (strain DSM 14237 / IC166 / ACAM 630).